The chain runs to 289 residues: 4-diphosphocytidyl-2-C-methyl-D-erythritol kinase (289 aa).

Lysine 10 is an active-site residue. 94-104 (PVAAGLAGGSS) lines the ATP pocket. The active site involves aspartate 136.

The protein belongs to the GHMP kinase family. IspE subfamily.

It catalyses the reaction 4-CDP-2-C-methyl-D-erythritol + ATP = 4-CDP-2-C-methyl-D-erythritol 2-phosphate + ADP + H(+). It functions in the pathway isoprenoid biosynthesis; isopentenyl diphosphate biosynthesis via DXP pathway; isopentenyl diphosphate from 1-deoxy-D-xylulose 5-phosphate: step 3/6. Catalyzes the phosphorylation of the position 2 hydroxy group of 4-diphosphocytidyl-2C-methyl-D-erythritol. This Bacillus pumilus (strain SAFR-032) protein is 4-diphosphocytidyl-2-C-methyl-D-erythritol kinase.